Here is a 443-residue protein sequence, read N- to C-terminus: Amino-acid acetyltransferase (443 aa).

The region spanning 296 to 436 (EQIRRATIND…KMYNYQRRSK (141 aa)) is the N-acetyltransferase domain.

It belongs to the acetyltransferase family. ArgA subfamily. In terms of assembly, homohexamer.

The protein localises to the cytoplasm. It carries out the reaction L-glutamate + acetyl-CoA = N-acetyl-L-glutamate + CoA + H(+). Its pathway is amino-acid biosynthesis; L-arginine biosynthesis; N(2)-acetyl-L-ornithine from L-glutamate: step 1/4. The chain is Amino-acid acetyltransferase from Salmonella arizonae (strain ATCC BAA-731 / CDC346-86 / RSK2980).